A 664-amino-acid polypeptide reads, in one-letter code: Glycine--tRNA ligase beta subunit (664 aa).

This sequence belongs to the class-II aminoacyl-tRNA synthetase family. Tetramer of two alpha and two beta subunits.

The protein localises to the cytoplasm. It catalyses the reaction tRNA(Gly) + glycine + ATP = glycyl-tRNA(Gly) + AMP + diphosphate. The polypeptide is Glycine--tRNA ligase beta subunit (Rickettsia conorii (strain ATCC VR-613 / Malish 7)).